Consider the following 121-residue polypeptide: Holo-[acyl-carrier-protein] synthase (121 aa).

Residues Asp8 and Glu58 each coordinate Mg(2+).

It belongs to the P-Pant transferase superfamily. AcpS family. Mg(2+) serves as cofactor.

It localises to the cytoplasm. The enzyme catalyses apo-[ACP] + CoA = holo-[ACP] + adenosine 3',5'-bisphosphate + H(+). In terms of biological role, transfers the 4'-phosphopantetheine moiety from coenzyme A to a Ser of acyl-carrier-protein. This is Holo-[acyl-carrier-protein] synthase from Bacillus velezensis (strain DSM 23117 / BGSC 10A6 / LMG 26770 / FZB42) (Bacillus amyloliquefaciens subsp. plantarum).